The following is a 610-amino-acid chain: Aspartate--tRNA(Asp/Asn) ligase (610 aa).

Glu-182 provides a ligand contact to L-aspartate. The tract at residues 206 to 209 (QLFK) is aspartate. Residue Arg-228 coordinates L-aspartate. ATP contacts are provided by residues 228 to 230 (RDE) and Gln-237. Position 470 (His-470) interacts with L-aspartate. Glu-506 contacts ATP. Arg-513 provides a ligand contact to L-aspartate. 558–561 (GLDR) serves as a coordination point for ATP.

This sequence belongs to the class-II aminoacyl-tRNA synthetase family. Type 1 subfamily. In terms of assembly, homodimer.

The protein localises to the cytoplasm. The catalysed reaction is tRNA(Asx) + L-aspartate + ATP = L-aspartyl-tRNA(Asx) + AMP + diphosphate. Functionally, aspartyl-tRNA synthetase with relaxed tRNA specificity since it is able to aspartylate not only its cognate tRNA(Asp) but also tRNA(Asn). Reaction proceeds in two steps: L-aspartate is first activated by ATP to form Asp-AMP and then transferred to the acceptor end of tRNA(Asp/Asn). The sequence is that of Aspartate--tRNA(Asp/Asn) ligase from Acidobacterium capsulatum (strain ATCC 51196 / DSM 11244 / BCRC 80197 / JCM 7670 / NBRC 15755 / NCIMB 13165 / 161).